Here is an 811-residue protein sequence, read N- to C-terminus: Receptor-like protein 52 (811 aa).

The first 22 residues, 1 to 22, serve as a signal peptide directing secretion; sequence MTFLPLLFIFFFLTSIPFPAFS. The Extracellular portion of the chain corresponds to 23–770; the sequence is QYNDRSTLLN…EDEEEVMNWT (748 aa). N-linked (GlcNAc...) asparagine glycans are attached at residues asparagine 47, asparagine 64, asparagine 74, asparagine 93, asparagine 109, and asparagine 124. LRR repeat units lie at residues 62 to 86, 87 to 110, 112 to 134, 135 to 159, 161 to 183, and 184 to 208; these read AGNVTEINFQNQNFTGTVPTTICNF, PNLKSLNLSFNYFAGEFPTVLYNC, KLQYLDLSQNLFNGSLPDDINRL, APKLKYLDLAANSFAGDIPKNIGRI, KLKVLNLYMSEYDGTFPSEIGDL, and SELEELQLALNDKFTPVKLPTEFGK. The stretch at 211-233 is one LRR 7; degenerate repeat; that stretch reads KLKYMWLEEMNLIGEISAVVFEN. N-linked (GlcNAc...) asparagine glycosylation is found at asparagine 233, asparagine 246, asparagine 260, asparagine 295, and asparagine 304. 8 LRR repeats span residues 234–258, 260–281, 282–305, 307–329, 330–354, 356–377, 379–401, and 403–427; these read MTDLKHVDLSVNNLTGRIPDVLFGL, NLTELYLFANDLTGEIPKSISA, KNLVHLDLSANNLNGSIPESIGNL, NLELLYLFVNELTGEIPRAIGKL, PELKELKLFTNKLTGEIPAEIGFIS, LERFEVSENQLTGKLPENLCHG, KLQSVIVYSNNLTGEIPESLGDC, and TLSSVLLQNNGFSGSVTISNNTRSN. N-linked (GlcNAc...) asparagine glycans are attached at residues asparagine 389, asparagine 422, asparagine 429, asparagine 455, asparagine 464, and asparagine 485. 10 LRR repeats span residues 441 to 465, 466 to 489, 491 to 511, 512 to 537, 539 to 557, 558 to 581, 625 to 649, 650 to 673, 674 to 697, and 699 to 722; these read LHSLILLDLSTNKFNGSIPRCIANL, STLEVLNLGKNHLSGSIPENISTS, KSIDIGHNQLAGKLPRSLVRI, SSLEVLNVESNKINDTFPFWLDSMQQ, QVLVLRSNAFHGSINQNGF, SKLRIIDISGNHFNGTLPLDFFVN, LNTFTTIDFSGNKFEGEIPRSVGLL, KELHVLNLSNNGFTGHIPSSMGNL, IELESLDVSQNKLSGEIPPELGKL, and YLAYMNFSQNQFVGLVPGGTQFQT. An N-linked (GlcNAc...) asparagine glycan is attached at asparagine 525. Residues asparagine 571 and asparagine 581 are each glycosylated (N-linked (GlcNAc...) asparagine). N-linked (GlcNAc...) asparagine glycosylation is present at asparagine 656. Residue asparagine 704 is glycosylated (N-linked (GlcNAc...) asparagine). Residues 771–791 form a helical membrane-spanning segment; the sequence is AAAIGSIPGISIGLTMGYILV. Over 792 to 811 the chain is Cytoplasmic; that stretch reads SYKPEWLMNSGRNKRRIKPI.

The protein belongs to the RLP family.

It localises to the cell membrane. In terms of biological role, required for defense against powdery mildew pathogen. This is Receptor-like protein 52 from Arabidopsis thaliana (Mouse-ear cress).